The chain runs to 102 residues: UPF0751 protein DSY4013 (102 aa).

The protein belongs to the UPF0751 family.

In Desulfitobacterium hafniense (strain Y51), this protein is UPF0751 protein DSY4013.